A 575-amino-acid chain; its full sequence is Transcription factor COE2 (575 aa).

Positions 62-65 (RKSN) are interaction with DNA. Residues 150 to 169 (CRVLLTHEVMCSRCCEKKSC) form a C5-type zinc finger. Interaction with DNA regions lie at residues 196–203 (NCLKTAGN) and 235–238 (NNSK). In terms of domain architecture, IPT/TIG spans 253–336 (PCIKAISPSE…KGAPGRFIYT (84 aa)). Positions 441 to 453 (STQGNNQGYIRNT) are enriched in polar residues. A disordered region spans residues 441–479 (STQGNNQGYIRNTSSISPRGYSSSSTPQQSNYSTSSNSM). Positions 454–479 (SSISPRGYSSSSTPQQSNYSTSSNSM) are enriched in low complexity.

It belongs to the COE family. As to quaternary structure, forms either a homodimer or a heterodimer with a related family member. Interacts with SIX1.

Its subcellular location is the nucleus. Functionally, transcription factor that, in osteoblasts, activates the decoy receptor for RANKL, TNFRSF11B, which in turn regulates osteoclast differentiation. Acts in synergy with the Wnt-responsive LEF1/CTNNB1 pathway. Recognizes variations of the palindromic sequence 5'-ATTCCCNNGGGAATT-3'. In Homo sapiens (Human), this protein is Transcription factor COE2 (EBF2).